The primary structure comprises 282 residues: Putative hydrolase Bmul_3283/BMULJ_05242 (282 aa).

Mg(2+) contacts are provided by Glu124, Glu126, and Asp155.

Belongs to the FAH family. It depends on Mg(2+) as a cofactor.

This chain is Putative hydrolase Bmul_3283/BMULJ_05242, found in Burkholderia multivorans (strain ATCC 17616 / 249).